Consider the following 343-residue polypeptide: N-acetyl-gamma-glutamyl-phosphate reductase (343 aa).

The active site involves C150.

Belongs to the NAGSA dehydrogenase family. Type 1 subfamily.

It is found in the cytoplasm. It carries out the reaction N-acetyl-L-glutamate 5-semialdehyde + phosphate + NADP(+) = N-acetyl-L-glutamyl 5-phosphate + NADPH + H(+). The protein operates within amino-acid biosynthesis; L-arginine biosynthesis; N(2)-acetyl-L-ornithine from L-glutamate: step 3/4. Catalyzes the NADPH-dependent reduction of N-acetyl-5-glutamyl phosphate to yield N-acetyl-L-glutamate 5-semialdehyde. The sequence is that of N-acetyl-gamma-glutamyl-phosphate reductase from Nitrosococcus oceani (strain ATCC 19707 / BCRC 17464 / JCM 30415 / NCIMB 11848 / C-107).